The primary structure comprises 282 residues: Homeobox protein vex1 (282 aa).

The homeobox DNA-binding region spans 129-188 (ASRARTKFTAEQLEELEKSFKENRYIGSSEKRRLSKVLKLSENQIKTWFQNRRMKFKRQT).

The protein localises to the nucleus. Its function is as follows. Transcriptional repressor. Acts in a ventral signaling pathway downstream of bmp4 to antagonize the Spemann organizer and ventrally pattern the embryonic mesoderm. Represses transcription of the dorsal genes gsc and otx2. This is Homeobox protein vex1 from Xenopus tropicalis (Western clawed frog).